The chain runs to 101 residues: Chaperone modulatory protein CbpM (101 aa).

Belongs to the CbpM family.

Interacts with CbpA and inhibits both the DnaJ-like co-chaperone activity and the DNA binding activity of CbpA. Together with CbpA, modulates the activity of the DnaK chaperone system. Does not inhibit the co-chaperone activity of DnaJ. The protein is Chaperone modulatory protein CbpM of Escherichia coli (strain K12 / MC4100 / BW2952).